The primary structure comprises 215 residues: Probable transaldolase (215 aa).

Catalysis depends on K83, which acts as the Schiff-base intermediate with substrate.

Belongs to the transaldolase family. Type 3B subfamily.

It is found in the cytoplasm. It catalyses the reaction D-sedoheptulose 7-phosphate + D-glyceraldehyde 3-phosphate = D-erythrose 4-phosphate + beta-D-fructose 6-phosphate. The protein operates within carbohydrate degradation; pentose phosphate pathway; D-glyceraldehyde 3-phosphate and beta-D-fructose 6-phosphate from D-ribose 5-phosphate and D-xylulose 5-phosphate (non-oxidative stage): step 2/3. Its function is as follows. Transaldolase is important for the balance of metabolites in the pentose-phosphate pathway. The protein is Probable transaldolase of Moorella thermoacetica (strain ATCC 39073 / JCM 9320).